The following is a 308-amino-acid chain: Ornithine carbamoyltransferase (308 aa).

Residues 56–59, Gln83, Arg107, and 134–137 contribute to the carbamoyl phosphate site; these read STRT and HPCQ. Residues Asn165, Asp225, and 229 to 230 each bind L-ornithine; that span reads SM. Residues 266–267 and Arg294 contribute to the carbamoyl phosphate site; that span reads CL.

Belongs to the aspartate/ornithine carbamoyltransferase superfamily. OTCase family.

The protein localises to the cytoplasm. It carries out the reaction carbamoyl phosphate + L-ornithine = L-citrulline + phosphate + H(+). It participates in amino-acid biosynthesis; L-arginine biosynthesis; L-arginine from L-ornithine and carbamoyl phosphate: step 1/3. Its function is as follows. Reversibly catalyzes the transfer of the carbamoyl group from carbamoyl phosphate (CP) to the N(epsilon) atom of ornithine (ORN) to produce L-citrulline. The sequence is that of Ornithine carbamoyltransferase from Roseobacter denitrificans (strain ATCC 33942 / OCh 114) (Erythrobacter sp. (strain OCh 114)).